The primary structure comprises 414 residues: Gamma-glutamyl phosphate reductase (414 aa).

The protein belongs to the gamma-glutamyl phosphate reductase family.

The protein resides in the cytoplasm. The enzyme catalyses L-glutamate 5-semialdehyde + phosphate + NADP(+) = L-glutamyl 5-phosphate + NADPH + H(+). Its pathway is amino-acid biosynthesis; L-proline biosynthesis; L-glutamate 5-semialdehyde from L-glutamate: step 2/2. Catalyzes the NADPH-dependent reduction of L-glutamate 5-phosphate into L-glutamate 5-semialdehyde and phosphate. The product spontaneously undergoes cyclization to form 1-pyrroline-5-carboxylate. The protein is Gamma-glutamyl phosphate reductase of Limosilactobacillus reuteri (strain DSM 20016) (Lactobacillus reuteri).